A 497-amino-acid chain; its full sequence is MDAMKYNDLRDFLTLLEQQGELKRITLPVDPHLEITEIADRTLRAGGPALLFENPKGYSMPVLCNLFGTPKRVAMGMGQEDVSALREVGKLLAFLKEPEPPKGFRDLFDKLPQFKQVLNMPTKRLRGAPCQQKIVSGDDVDLNRIPIMTCWPEDAAPLITWGLTVTRGPHKERQNLGIYRQQLIGKNKLIMRWLSHRGGALDYQEWCAAHPGERFPVSVALGADPATILGAVTPVPDTLSEYAFAGLLRGTKTEVVKCISNDLEVPASAEIVLEGYIEQGETAPEGPYGDHTGYYNEVDSFPVFTVTHITQREDAIYHSTYTGRPPDEPAVLGVALNEVFVPILQKQFPEIVDFYLPPEGCSYRLAVVTIKKQYAGHAKRVMMGVWSFLRQFMYTKFVIVCDDDVNARDWNDVIWAITTRMDPARDTVLVENTPIDYLDFASPVSGLGSKMGLDATNKWPGETQREWGRPIKKDPDVVAHIDAIWDELAIFNNGKSA.

Residue N175 coordinates Mn(2+). Prenylated FMN-binding positions include 178-180 (IYR), 192-194 (RWL), and 197-198 (RG). Position 241 (E241) interacts with Mn(2+). The Proton donor role is filled by D290.

Belongs to the UbiD family. In terms of assembly, homohexamer. Prenylated FMN serves as cofactor. The cofactor is Mn(2+).

Its subcellular location is the cell membrane. The catalysed reaction is a 4-hydroxy-3-(all-trans-polyprenyl)benzoate + H(+) = a 2-(all-trans-polyprenyl)phenol + CO2. The protein operates within cofactor biosynthesis; ubiquinone biosynthesis. Functionally, catalyzes the decarboxylation of 3-octaprenyl-4-hydroxy benzoate to 2-octaprenylphenol, an intermediate step in ubiquinone biosynthesis. The protein is 3-octaprenyl-4-hydroxybenzoate carboxy-lyase of Shigella sonnei (strain Ss046).